The sequence spans 1345 residues: Protein dispatched homolog 2 (1345 aa).

Residues 1 to 28 (MAPEASPERSCSLHTCPLEDPTGAPVPP) form a disordered region. The chain crosses the membrane as a helical span at residues 125–145 (VAVIVGCLAFIFLCTLAGLLG). Asn-304 and Asn-420 each carry an N-linked (GlcNAc...) asparagine glycan. Residues 429 to 598 (LGLKPRLLKY…LLWLPATVVL (170 aa)) enclose the SSD domain. Helical transmembrane passes span 440-460 (LAEDTMYPLIALVVIFFGMSL), 465-485 (LFITFMSLLGVLGSLMVAYFL), 497-517 (FVNLAALLLLSGVCVNYTLIF), 544-564 (FGYLLLVSGLTTSAAFYGSYL), 572-592 (CFALFMGTAVLVHMGLTLLWL), and 659-679 (YIWICWFAALAAGGAYIGGVS). The N-linked (GlcNAc...) asparagine glycan is linked to Asn-776. 5 helical membrane passes run 919–939 (PAVVLGLALALAFATLLLSTW), 945–965 (LFSVAAVAGTVLLTVGLLVLL), 974–994 (ALFLSASVGLSVDLTINYCIS), 1019–1039 (AMTTGVLFASGVIMLPSTILL), and 1043–1063 (LGIIVMMVKFLGCGFASFFFQ). 2 disordered regions span residues 1251 to 1271 (VRVPDSVGTSPEVMNGTGHPI) and 1295 to 1345 (PNMP…GYSS). Polar residues predominate over residues 1297–1306 (MPNSHHSSLS). Arg-1310 is subject to Omega-N-methylarginine.

This sequence belongs to the dispatched family.

The protein localises to the membrane. This chain is Protein dispatched homolog 2 (Disp2), found in Mus musculus (Mouse).